The chain runs to 491 residues: Glutamyl-tRNA(Gln) amidotransferase subunit A (491 aa).

Residues Lys-76 and Ser-154 each act as charge relay system in the active site. Ser-178 acts as the Acyl-ester intermediate in catalysis.

The protein belongs to the amidase family. GatA subfamily. As to quaternary structure, heterotrimer of A, B and C subunits.

It carries out the reaction L-glutamyl-tRNA(Gln) + L-glutamine + ATP + H2O = L-glutaminyl-tRNA(Gln) + L-glutamate + ADP + phosphate + H(+). Functionally, allows the formation of correctly charged Gln-tRNA(Gln) through the transamidation of misacylated Glu-tRNA(Gln) in organisms which lack glutaminyl-tRNA synthetase. The reaction takes place in the presence of glutamine and ATP through an activated gamma-phospho-Glu-tRNA(Gln). In Cereibacter sphaeroides (strain ATCC 17025 / ATH 2.4.3) (Rhodobacter sphaeroides), this protein is Glutamyl-tRNA(Gln) amidotransferase subunit A.